Consider the following 296-residue polypeptide: Phosphatidylglycerol--prolipoprotein diacylglyceryl transferase (296 aa).

The segment at 1–21 (MRHRRRPGGRSTAGGTPVSQL) is disordered. A run of 7 helical transmembrane segments spans residues 34–54 (GPLT…VAYI), 72–92 (ELCA…HVIT), 108–128 (FFIW…GLAI), 136–158 (GIRF…AIGR), 195–215 (FHPT…FLLW), 227–243 (LFTL…FWVE), and 258–278 (LNDV…IVLQ). R158 contacts a 1,2-diacyl-sn-glycero-3-phospho-(1'-sn-glycerol).

The protein belongs to the Lgt family.

It is found in the cell membrane. It carries out the reaction L-cysteinyl-[prolipoprotein] + a 1,2-diacyl-sn-glycero-3-phospho-(1'-sn-glycerol) = an S-1,2-diacyl-sn-glyceryl-L-cysteinyl-[prolipoprotein] + sn-glycerol 1-phosphate + H(+). It functions in the pathway protein modification; lipoprotein biosynthesis (diacylglyceryl transfer). Its function is as follows. Catalyzes the transfer of the diacylglyceryl group from phosphatidylglycerol to the sulfhydryl group of the N-terminal cysteine of a prolipoprotein, the first step in the formation of mature lipoproteins. This chain is Phosphatidylglycerol--prolipoprotein diacylglyceryl transferase, found in Cutibacterium acnes (strain DSM 16379 / KPA171202) (Propionibacterium acnes).